We begin with the raw amino-acid sequence, 853 residues long: DNA mismatch repair protein MutS (853 aa).

614-621 (GPNMGGKS) contacts ATP.

The protein belongs to the DNA mismatch repair MutS family.

Its function is as follows. This protein is involved in the repair of mismatches in DNA. It is possible that it carries out the mismatch recognition step. This protein has a weak ATPase activity. This is DNA mismatch repair protein MutS from Escherichia coli (strain SMS-3-5 / SECEC).